The sequence spans 292 residues: Elongation factor Ts (292 aa).

The tract at residues 80–83 (TDFV) is involved in Mg(2+) ion dislocation from EF-Tu.

It belongs to the EF-Ts family.

Its subcellular location is the cytoplasm. Functionally, associates with the EF-Tu.GDP complex and induces the exchange of GDP to GTP. It remains bound to the aminoacyl-tRNA.EF-Tu.GTP complex up to the GTP hydrolysis stage on the ribosome. This is Elongation factor Ts from Cupriavidus taiwanensis (strain DSM 17343 / BCRC 17206 / CCUG 44338 / CIP 107171 / LMG 19424 / R1) (Ralstonia taiwanensis (strain LMG 19424)).